The primary structure comprises 525 residues: ATP synthase subunit alpha (525 aa).

171–178 (GDRQTGKS) is an ATP binding site.

The protein belongs to the ATPase alpha/beta chains family. In terms of assembly, F-type ATPases have 2 components, CF(1) - the catalytic core - and CF(0) - the membrane proton channel. CF(1) has five subunits: alpha(3), beta(3), gamma(1), delta(1), epsilon(1). CF(0) has three main subunits: a(1), b(2) and c(9-12). The alpha and beta chains form an alternating ring which encloses part of the gamma chain. CF(1) is attached to CF(0) by a central stalk formed by the gamma and epsilon chains, while a peripheral stalk is formed by the delta and b chains.

It localises to the cell inner membrane. It catalyses the reaction ATP + H2O + 4 H(+)(in) = ADP + phosphate + 5 H(+)(out). Produces ATP from ADP in the presence of a proton gradient across the membrane. The alpha chain is a regulatory subunit. This chain is ATP synthase subunit alpha, found in Flavobacterium psychrophilum (strain ATCC 49511 / DSM 21280 / CIP 103535 / JIP02/86).